Reading from the N-terminus, the 269-residue chain is Cytolethal distending toxin subunit B homolog (269 aa).

Residues 1-22 form the signal peptide; it reads MKKPVFFLLTMIICSYISFACA.

Its subcellular location is the secreted. In terms of biological role, produces a CDT (cytolethal distending toxin) activity, which causes DNA damage in intoxicated cells. This damage induces G2/M cell cycle arrest, chromatin fragmentation, cell distention and nucleus enlargement. This chain is Cytolethal distending toxin subunit B homolog (cdtB), found in Salmonella typhi.